The primary structure comprises 177 residues: MKHTIKVIISEKELDIRVRELGEEITKKYKNSKNKIILIALLRGSFVFIADLCRRIKIEHEIDFMTTSSYGRGMISTGDVKIIKDLDEDIYNKNVLIVEDIIDSGKTLSKVLGILKLRNPKSLSICTLLDKPECREVNINIDFVGFSIPDEFMVGYGIDYAQSYRYLPYIGKVIFKK.

2 residues coordinate diphosphate: Arg43 and Gly44. Glu99 provides a ligand contact to GMP. Residue Glu99 coordinates IMP. Positions 99 and 100 each coordinate Mg(2+). Asp103 functions as the Proton acceptor in the catalytic mechanism. GMP-binding positions include 103–108 (DSGKTL), Lys131, and Asp159. Residues 103 to 108 (DSGKTL) and Lys131 each bind IMP. Arg165 contacts diphosphate.

This sequence belongs to the purine/pyrimidine phosphoribosyltransferase family. Homotetramer. The cofactor is Mg(2+).

The protein localises to the cytoplasm. The catalysed reaction is IMP + diphosphate = hypoxanthine + 5-phospho-alpha-D-ribose 1-diphosphate. It catalyses the reaction GMP + diphosphate = guanine + 5-phospho-alpha-D-ribose 1-diphosphate. It participates in purine metabolism; IMP biosynthesis via salvage pathway; IMP from hypoxanthine: step 1/1. Purine salvage pathway enzyme which catalyzes the transfer of the ribosyl-5-phosphate group from 5-phospho-alpha-D-ribose 1-diphosphate (PRPP) to the N9 position of hypoxanthine to yield IMP (inosine 5'-monophosphate). To a lesser extent, can also act on guanine leading to GMP, but shows a highly less efficient activity with xanthine. The sequence is that of Hypoxanthine phosphoribosyltransferase (hpt) from Buchnera aphidicola subsp. Schizaphis graminum (strain Sg).